An 807-amino-acid chain; its full sequence is Ecotropic viral integration site 5 ortholog (807 aa).

The tract at residues 1–31 (MTLTTTTTASSAESQAKMDVKGGALPGEENL) is disordered. The residue at position 33 (Thr-33) is a Phosphothreonine. Ser-58 and Ser-64 each carry phosphoserine. In terms of domain architecture, Rab-GAP TBC spans 116–300 (GIPHHFRAIV…RIMDVFLSEG (185 aa)). Coiled coils occupy residues 352–463 (SIKL…ENNV), 494–583 (CLLE…ENQR), and 627–772 (REME…RGKF).

In terms of assembly, interacts with Rab11.

The protein resides in the cytoplasm. Its subcellular location is the endosome. Functionally, functions as a GTPase-activating protein (GAP). During border cell migration in the ovary, acts as a GAP for Rab11 and is necessary for the maintenance of active receptor tyrosine kinases at the leading edge. The sequence is that of Ecotropic viral integration site 5 ortholog (Evi5) from Drosophila melanogaster (Fruit fly).